Consider the following 202-residue polypeptide: Josephin-1 (202 aa).

Ser15 carries the post-translational modification Phosphoserine. The Josephin domain maps to 23-202 (PPQIYHEKQR…EAHQSWRTDV (180 aa)). Cys36 (nucleophile) is an active-site residue. The Proton acceptor role is filled by His139.

As to quaternary structure, interacts with beta-actin/ACTB. In terms of processing, monoubiquitinated. Ubiquitination activates deubiquitination activity in vitro.

Its subcellular location is the cell membrane. It is found in the cytoplasm. It catalyses the reaction Thiol-dependent hydrolysis of ester, thioester, amide, peptide and isopeptide bonds formed by the C-terminal Gly of ubiquitin (a 76-residue protein attached to proteins as an intracellular targeting signal).. Its function is as follows. Deubiquitinates monoubiquitinated probes (in vitro). When ubiquitinated, cleaves 'Lys-63'-linked and 'Lys-48'-linked poly-ubiquitin chains (in vitro), hence may act as a deubiquitinating enzyme. May increase macropinocytosis and suppress clathrin- and caveolae-mediated endocytosis. May enhance membrane dynamics and cell motility independently of its catalytic activity. This is Josephin-1 (JOSD1) from Pongo abelii (Sumatran orangutan).